We begin with the raw amino-acid sequence, 277 residues long: Undecaprenyl-diphosphatase (277 aa).

Transmembrane regions (helical) follow at residues 3–23 (IALLIKAAIMGIVEGLTEFLP), 44–64 (AKVFDIAIQTGAIFAVILVYW), 82–102 (QFALNVLVAFVPAVVLGLLFG), 109–129 (LFTPVVVASAFIVGGFIILWA), 189–209 (TDFSFYLAIPTLIGAGAYSLF), 218–238 (ADAPMFGVGLLFSFLSAWLCI), and 253–273 (FAWYRIAFGIVVLATAWSGVV).

The protein belongs to the UppP family.

The protein resides in the cell inner membrane. The catalysed reaction is di-trans,octa-cis-undecaprenyl diphosphate + H2O = di-trans,octa-cis-undecaprenyl phosphate + phosphate + H(+). Functionally, catalyzes the dephosphorylation of undecaprenyl diphosphate (UPP). Confers resistance to bacitracin. The polypeptide is Undecaprenyl-diphosphatase (Polaromonas naphthalenivorans (strain CJ2)).